We begin with the raw amino-acid sequence, 589 residues long: MQFSVLAGSLEKMESTAKRLELTGILEELLRETPHEVIAQIVYLIQGKLRPEFEGIELGVAEKLAVRAVSKSSGMPAARIEAAYRRDGDLGRAASSILEQKTQTTFLAEEITVERVYDTLMRIARLEGARSQDMKMRHISSLLNDASPRDACYILKLILGTLRLGIAENTVMDALAAAFTGSKSNRPELERAYNVSSDLGRVAEAVSSGGLEAVRGFAVAVFSPIRPMLADRVRSESEALEKMGAGLAAEYKLDGERVQVHLSGGRVELFSRSLENITAYYPDIVERIPGRLRAREAVLEAEAVAVNEETGEFLPFQELMHRRRKYDIDKAVMRYPITVNFFDILYLDGRDCLGISYSERRALLEGVVDEDSFARCVPVSTIPDESALEDSLENSINAGCEGLMLKLPDAPYRAGSRGGYWLKLKREYRNELGDSLDLVIIGAFFGKGRRTGRYGTLLLATYDDSRDTFPSICKVGTGFTDEDLDQLYQLLSPRVTLKRNPRIDSGMEADVWFDPEVVMEVVASEITLSPVHKTALDSVRKGAGLALRFPKFTGKLRTEKTAEDASTDQEVIALYKSQKKVVPDGQPGV.

Residue Glu250 participates in ATP binding. Lys252 functions as the N6-AMP-lysine intermediate in the catalytic mechanism. 6 residues coordinate ATP: Arg257, Arg272, Glu302, Phe342, Arg417, and Lys423.

The protein belongs to the ATP-dependent DNA ligase family. Requires Mg(2+) as cofactor.

The enzyme catalyses ATP + (deoxyribonucleotide)n-3'-hydroxyl + 5'-phospho-(deoxyribonucleotide)m = (deoxyribonucleotide)n+m + AMP + diphosphate.. In terms of biological role, DNA ligase that seals nicks in double-stranded DNA during DNA replication, DNA recombination and DNA repair. The protein is DNA ligase of Cenarchaeum symbiosum (strain A).